Reading from the N-terminus, the 1265-residue chain is DNA-directed RNA polymerase subunit beta'' (1265 aa).

4 residues coordinate Zn(2+): C223, C297, C304, and C307.

Belongs to the RNA polymerase beta' chain family. RpoC2 subfamily. In terms of assembly, in plastids the minimal PEP RNA polymerase catalytic core is composed of four subunits: alpha, beta, beta', and beta''. When a (nuclear-encoded) sigma factor is associated with the core the holoenzyme is formed, which can initiate transcription. It depends on Zn(2+) as a cofactor.

It is found in the plastid. The protein localises to the cyanelle. It carries out the reaction RNA(n) + a ribonucleoside 5'-triphosphate = RNA(n+1) + diphosphate. DNA-dependent RNA polymerase catalyzes the transcription of DNA into RNA using the four ribonucleoside triphosphates as substrates. This Cyanophora paradoxa protein is DNA-directed RNA polymerase subunit beta''.